The following is a 103-amino-acid chain: Large ribosomal subunit protein uL24 (103 aa).

This sequence belongs to the universal ribosomal protein uL24 family. As to quaternary structure, part of the 50S ribosomal subunit.

Its function is as follows. One of two assembly initiator proteins, it binds directly to the 5'-end of the 23S rRNA, where it nucleates assembly of the 50S subunit. One of the proteins that surrounds the polypeptide exit tunnel on the outside of the subunit. The sequence is that of Large ribosomal subunit protein uL24 from Vesicomyosocius okutanii subsp. Calyptogena okutanii (strain HA).